The sequence spans 351 residues: Alcohol dehydrogenase 2 (351 aa).

Residues cysteine 47, histidine 70, cysteine 101, cysteine 104, cysteine 107, cysteine 115, and cysteine 157 each coordinate Zn(2+). Residues 181–187 (GAGGGLG), aspartate 205, lysine 209, 271–273 (VGL), and arginine 343 contribute to the NAD(+) site.

The protein belongs to the zinc-containing alcohol dehydrogenase family. Homotetramer. Zn(2+) serves as cofactor.

The catalysed reaction is a primary alcohol + NAD(+) = an aldehyde + NADH + H(+). The enzyme catalyses a secondary alcohol + NAD(+) = a ketone + NADH + H(+). The protein is Alcohol dehydrogenase 2 (sodh-2) of Caenorhabditis elegans.